The chain runs to 225 residues: Small ribosomal subunit protein uS3 (225 aa).

The 69-residue stretch at 38–106 folds into the KH type-2 domain; it reads IRRFLQKKFK…PIGMNIIEVK (69 aa).

The protein belongs to the universal ribosomal protein uS3 family. As to quaternary structure, part of the 30S ribosomal subunit. Forms a tight complex with proteins S10 and S14.

Its function is as follows. Binds the lower part of the 30S subunit head. Binds mRNA in the 70S ribosome, positioning it for translation. This is Small ribosomal subunit protein uS3 from Leptospira biflexa serovar Patoc (strain Patoc 1 / Ames).